Reading from the N-terminus, the 167-residue chain is NADH-quinone oxidoreductase subunit I 1 (167 aa).

2 consecutive 4Fe-4S ferredoxin-type domains span residues Leu-52 to Ala-82 and Lys-98 to Gly-127. Residues Cys-62, Cys-65, Cys-68, Cys-72, Cys-107, Cys-110, Cys-113, and Cys-117 each coordinate [4Fe-4S] cluster. Residues Pro-148–His-167 are disordered.

This sequence belongs to the complex I 23 kDa subunit family. In terms of assembly, NDH-1 is composed of 14 different subunits. Subunits NuoA, H, J, K, L, M, N constitute the membrane sector of the complex. The cofactor is [4Fe-4S] cluster.

Its subcellular location is the cell inner membrane. The enzyme catalyses a quinone + NADH + 5 H(+)(in) = a quinol + NAD(+) + 4 H(+)(out). Its function is as follows. NDH-1 shuttles electrons from NADH, via FMN and iron-sulfur (Fe-S) centers, to quinones in the respiratory chain. The immediate electron acceptor for the enzyme in this species is believed to be ubiquinone. Couples the redox reaction to proton translocation (for every two electrons transferred, four hydrogen ions are translocated across the cytoplasmic membrane), and thus conserves the redox energy in a proton gradient. The polypeptide is NADH-quinone oxidoreductase subunit I 1 (Solibacter usitatus (strain Ellin6076)).